A 92-amino-acid chain; its full sequence is LYR motif-containing protein 4 homolog (92 aa).

A coiled-coil region spans residues 48–68 (AEIDRQMAEGQQNLELIRRQV).

It belongs to the complex I LYR family. As to quaternary structure, component of the mitochondrial core iron-sulfur cluster (ISC) assembly complex at least composed of the cysteine desulfurase Nfs1, the scaffold protein IscU, the accessory protein bcn92/Isd11/Lyrm4, and probably fh/frataxin. Interacts with Nfs1.

The protein localises to the mitochondrion. Stabilizing factor of the core iron-sulfur cluster (ISC) assembly complex that regulates the stability and cysteine desulfurase activity of Nfs1 and participates in the [2Fe-2S] clusters assembly on the scaffolding protein IscU. This is LYR motif-containing protein 4 homolog from Drosophila melanogaster (Fruit fly).